A 284-amino-acid polypeptide reads, in one-letter code: tRNA pseudouridine synthase A (284 aa).

Asp-62 serves as the catalytic Nucleophile. Substrate is bound at residue Tyr-120.

This sequence belongs to the tRNA pseudouridine synthase TruA family. In terms of assembly, homodimer.

The enzyme catalyses uridine(38/39/40) in tRNA = pseudouridine(38/39/40) in tRNA. In terms of biological role, formation of pseudouridine at positions 38, 39 and 40 in the anticodon stem and loop of transfer RNAs. The sequence is that of tRNA pseudouridine synthase A from Thermosynechococcus vestitus (strain NIES-2133 / IAM M-273 / BP-1).